The primary structure comprises 298 residues: Protein RKD2 (298 aa).

Basic and acidic residues-rich tracts occupy residues 1 to 10 and 81 to 102; these read MADHTTKEQK and EQNR…VKET. Disordered stretches follow at residues 1–22 and 73–112; these read MADH…PSFD and SSAS…NERH. In terms of domain architecture, RWP-RK spans 121–203; the sequence is SDITTYTTSS…KMEGEENAEK (83 aa). The stretch at 188–222 forms a coiled coil; sequence NVKELQKMEGEENAEKLQDALEMLEKEKRTIEDLP. Residues 241-279 are disordered; the sequence is NHKRKKKRSLKSDQSQVPSCSSSGSVPSDESVDEAGMES. Positions 252–269 are enriched in low complexity; it reads SDQSQVPSCSSSGSVPSD. The span at 270-279 shows a compositional bias: acidic residues; that stretch reads ESVDEAGMES.

It localises to the nucleus. Functionally, putative transcription factor. This is Protein RKD2 (RKD2) from Arabidopsis thaliana (Mouse-ear cress).